The chain runs to 620 residues: 1-deoxy-D-xylulose-5-phosphate synthase (620 aa).

Thiamine diphosphate is bound by residues His80 and 121 to 123 (GHS). A Mg(2+)-binding site is contributed by Asp152. Thiamine diphosphate-binding positions include 153 to 154 (GA), Asn181, Tyr288, and Glu370. Position 181 (Asn181) interacts with Mg(2+).

It belongs to the transketolase family. DXPS subfamily. In terms of assembly, homodimer. The cofactor is Mg(2+). Thiamine diphosphate is required as a cofactor.

The enzyme catalyses D-glyceraldehyde 3-phosphate + pyruvate + H(+) = 1-deoxy-D-xylulose 5-phosphate + CO2. It participates in metabolic intermediate biosynthesis; 1-deoxy-D-xylulose 5-phosphate biosynthesis; 1-deoxy-D-xylulose 5-phosphate from D-glyceraldehyde 3-phosphate and pyruvate: step 1/1. In terms of biological role, catalyzes the acyloin condensation reaction between C atoms 2 and 3 of pyruvate and glyceraldehyde 3-phosphate to yield 1-deoxy-D-xylulose-5-phosphate (DXP). The protein is 1-deoxy-D-xylulose-5-phosphate synthase of Escherichia coli (strain K12 / MC4100 / BW2952).